The following is a 437-amino-acid chain: Purple acid phosphatase 18 (437 aa).

The N-terminal stretch at 1–23 (MEKWGILLLVTLSVSIIFTSAAA) is a signal peptide. Fe cation is bound by residues Asp148, Asp175, and Tyr178. Asp175 is a binding site for Zn(2+). Zn(2+) is bound by residues Asn208 and His291. Asn208 contacts substrate. Residue His301 is the Proton donor of the active site. His328 lines the Zn(2+) pocket. A substrate-binding site is contributed by 328–330 (HVH). Position 330 (His330) interacts with Fe cation. A glycan (N-linked (GlcNAc...) asparagine) is linked at Asn390.

It belongs to the metallophosphoesterase superfamily. Purple acid phosphatase family. Homodimer. Fe cation serves as cofactor. Zn(2+) is required as a cofactor. In terms of tissue distribution, expressed in roots, stems, leaves, flowers and siliques.

The protein resides in the secreted. The enzyme catalyses a phosphate monoester + H2O = an alcohol + phosphate. This chain is Purple acid phosphatase 18 (PAP18), found in Arabidopsis thaliana (Mouse-ear cress).